The chain runs to 270 residues: Cbp/p300-interacting transactivator 2 (270 aa).

The disordered stretch occupies residues 138-201; that stretch reads LHPAAGHQMN…SGGGSGSGNM (64 aa). Residues 165-198 show a composition bias toward gly residues; sequence STPGGSGGSSTPGGSGSSSGGGAGSSNSGGGSGS.

It belongs to the CITED family. In terms of assembly, interacts (via C-terminus) with SMAD2. Interacts (via C-terminus) with SMAD3 (via MH2 domain). Interacts with LHX2 (via LIM domains). Interacts with WT1. Interacts (via C-terminus) with EP300 (via CH1 domain); the interaction is stimulated in response to hypoxia. Interacts with PPARA. Interacts (via C-terminus) with TFAP2A, TFAP2B and TFAP2C.

It is found in the nucleus. Its function is as follows. Transcriptional coactivator of the p300/CBP-mediated transcription complex. Acts as a bridge, linking TFAP2 transcription factors and the p300/CBP transcriptional coactivator complex in order to stimulate TFAP2-mediated transcriptional activation. Positively regulates TGF-beta signaling through its association with the SMAD/p300/CBP-mediated transcriptional coactivator complex. Stimulates the peroxisome proliferator-activated receptors PPARA transcriptional activity. Enhances estrogen-dependent transactivation mediated by estrogen receptors. Also acts as a transcriptional corepressor; interferes with the binding of the transcription factors HIF1A or STAT2 and the p300/CBP transcriptional coactivator complex. Participates in sex determination and early gonad development by stimulating transcription activation of SRY. Plays a role in controlling left-right patterning during embryogenesis; potentiates transcriptional activation of NODAL-mediated gene transcription in the left lateral plate mesoderm (LPM). Plays an essential role in differentiation of the adrenal cortex from the adrenogonadal primordium (AGP); stimulates WT1-mediated transcription activation thereby up-regulating the nuclear hormone receptor NR5A1 promoter activity. Associates with chromatin to the PITX2 P1 promoter region. The chain is Cbp/p300-interacting transactivator 2 (CITED2) from Homo sapiens (Human).